The chain runs to 50 residues: Sperm protamine P1 (50 aa).

Intrachain disulfides connect Cys-7-Cys-15 and Cys-38-Cys-46.

Belongs to the protamine P1 family. Cross-linked by interchain disulfide bonds around the DNA-helix. Testis.

Its subcellular location is the nucleus. It is found in the chromosome. Its function is as follows. Protamines substitute for histones in the chromatin of sperm during the haploid phase of spermatogenesis. They compact sperm DNA into a highly condensed, stable and inactive complex. The protein is Sperm protamine P1 (PRM1) of Equus caballus (Horse).